The primary structure comprises 79 residues: Succinate dehydrogenase assembly factor 1, mitochondrial (79 aa).

The protein belongs to the complex I LYR family. SDHAF1 subfamily. As to quaternary structure, interacts with SDH2 within an SDH1-SDH2 subcomplex.

The protein resides in the mitochondrion matrix. Plays an essential role in the assembly of succinate dehydrogenase (SDH), an enzyme complex (also referred to as respiratory complex II) that is a component of both the tricarboxylic acid (TCA) cycle and the mitochondrial electron transport chain, and which couples the oxidation of succinate to fumarate with the reduction of ubiquinone (coenzyme Q) to ubiquinol. Promotes maturation of the iron-sulfur protein subunit SDH2 of the SDH catalytic dimer, protecting it from the deleterious effects of oxidants. Acts together with SDHAF3 (SDH7). In Saccharomyces cerevisiae (strain YJM789) (Baker's yeast), this protein is Succinate dehydrogenase assembly factor 1, mitochondrial.